Reading from the N-terminus, the 93-residue chain is DNA-directed RNA polymerase subunit omega (93 aa).

It belongs to the RNA polymerase subunit omega family. As to quaternary structure, the RNAP catalytic core consists of 2 alpha, 1 beta, 1 beta' and 1 omega subunit. When a sigma factor is associated with the core the holoenzyme is formed, which can initiate transcription.

The catalysed reaction is RNA(n) + a ribonucleoside 5'-triphosphate = RNA(n+1) + diphosphate. Its function is as follows. Promotes RNA polymerase assembly. Latches the N- and C-terminal regions of the beta' subunit thereby facilitating its interaction with the beta and alpha subunits. The protein is DNA-directed RNA polymerase subunit omega of Shewanella piezotolerans (strain WP3 / JCM 13877).